A 179-amino-acid chain; its full sequence is Large ribosomal subunit protein uL5 (179 aa).

It belongs to the universal ribosomal protein uL5 family. Part of the 50S ribosomal subunit; part of the 5S rRNA/L5/L18/L25 subcomplex. Contacts the 5S rRNA and the P site tRNA. Forms a bridge to the 30S subunit in the 70S ribosome.

Functionally, this is one of the proteins that bind and probably mediate the attachment of the 5S RNA into the large ribosomal subunit, where it forms part of the central protuberance. In the 70S ribosome it contacts protein S13 of the 30S subunit (bridge B1b), connecting the 2 subunits; this bridge is implicated in subunit movement. Contacts the P site tRNA; the 5S rRNA and some of its associated proteins might help stabilize positioning of ribosome-bound tRNAs. The sequence is that of Large ribosomal subunit protein uL5 from Synechococcus sp. (strain CC9605).